A 528-amino-acid chain; its full sequence is Glutamate--cysteine ligase (528 aa).

Belongs to the glutamate--cysteine ligase type 1 family. Type 1 subfamily.

The enzyme catalyses L-cysteine + L-glutamate + ATP = gamma-L-glutamyl-L-cysteine + ADP + phosphate + H(+). It participates in sulfur metabolism; glutathione biosynthesis; glutathione from L-cysteine and L-glutamate: step 1/2. This chain is Glutamate--cysteine ligase, found in Janthinobacterium sp. (strain Marseille) (Minibacterium massiliensis).